The sequence spans 352 residues: MSGNTFGALFTVTTFGESHGPAIGCVVDGCPPGMSLTEADIQPFLDKRKPGQSKYTTQRREEDKVQILSGVFDGKTTGAPIALLIQNTDQRSRDYEDIKNLFRPGHADFTYHYKYGHRDYRGGGRSSARETAARVAAGAIARLYLKRYLNLDIIGYLQQMGDLKLQFENENEINKNPFFCPNNKQIQELADYVDRLRRQGDSVGARVKILARGVPTGLGDPVFDKLDATLAYAMMSINAVKGVEIGAGFNAVEQLGSHHRDQMTAKGFLSNHAGGILGGIATGQPIEVSIALKPTSSITTPGQTINTEGEEVTVVTKGRHDPCVGIRAVPIAEAMMALVLMDHYLRHKAQCK.

NADP(+) is bound at residue R48. FMN contacts are provided by residues 125–127 (RSS), 238–239 (NA), G278, 293–297 (KPTSS), and R319.

This sequence belongs to the chorismate synthase family. In terms of assembly, homotetramer. It depends on FMNH2 as a cofactor.

It catalyses the reaction 5-O-(1-carboxyvinyl)-3-phosphoshikimate = chorismate + phosphate. It participates in metabolic intermediate biosynthesis; chorismate biosynthesis; chorismate from D-erythrose 4-phosphate and phosphoenolpyruvate: step 7/7. In terms of biological role, catalyzes the anti-1,4-elimination of the C-3 phosphate and the C-6 proR hydrogen from 5-enolpyruvylshikimate-3-phosphate (EPSP) to yield chorismate, which is the branch point compound that serves as the starting substrate for the three terminal pathways of aromatic amino acid biosynthesis. This reaction introduces a second double bond into the aromatic ring system. This is Chorismate synthase from Legionella pneumophila subsp. pneumophila (strain Philadelphia 1 / ATCC 33152 / DSM 7513).